We begin with the raw amino-acid sequence, 213 residues long: Orotate phosphoribosyltransferase (213 aa).

Lysine 26 is a 5-phospho-alpha-D-ribose 1-diphosphate binding site. 34–35 (FF) is an orotate binding site. Residues 72–73 (YK), arginine 99, lysine 100, lysine 103, histidine 105, and 124–132 (DDVITAGTA) contribute to the 5-phospho-alpha-D-ribose 1-diphosphate site. 2 residues coordinate orotate: threonine 128 and arginine 156.

Belongs to the purine/pyrimidine phosphoribosyltransferase family. PyrE subfamily. Homodimer. Mg(2+) is required as a cofactor.

The enzyme catalyses orotidine 5'-phosphate + diphosphate = orotate + 5-phospho-alpha-D-ribose 1-diphosphate. It participates in pyrimidine metabolism; UMP biosynthesis via de novo pathway; UMP from orotate: step 1/2. Catalyzes the transfer of a ribosyl phosphate group from 5-phosphoribose 1-diphosphate to orotate, leading to the formation of orotidine monophosphate (OMP). This chain is Orotate phosphoribosyltransferase, found in Pectobacterium carotovorum subsp. carotovorum (strain PC1).